We begin with the raw amino-acid sequence, 274 residues long: Orotidine 5'-phosphate decarboxylase (274 aa).

The active-site Proton donor is lysine 96.

The protein belongs to the OMP decarboxylase family. Type 2 subfamily.

It carries out the reaction orotidine 5'-phosphate + H(+) = UMP + CO2. The protein operates within pyrimidine metabolism; UMP biosynthesis via de novo pathway; UMP from orotate: step 2/2. This is Orotidine 5'-phosphate decarboxylase from Bacteroides fragilis (strain ATCC 25285 / DSM 2151 / CCUG 4856 / JCM 11019 / LMG 10263 / NCTC 9343 / Onslow / VPI 2553 / EN-2).